Reading from the N-terminus, the 164-residue chain is Seripauperin-21 (164 aa).

Belongs to the SRP1/TIP1 family. Seripauperin subfamily.

This is Seripauperin-21 (PAU21) from Saccharomyces cerevisiae (strain ATCC 204508 / S288c) (Baker's yeast).